Consider the following 341-residue polypeptide: 2-keto-4-carboxy-3-hexenedioate hydratase (341 aa).

Zn(2+) contacts are provided by histidine 8 and histidine 10. Residue 71–73 (RAS) participates in substrate binding. A Zn(2+)-binding site is contributed by histidine 178. Substrate-binding residues include tyrosine 194 and histidine 223. Glutamate 284 functions as the Proton donor/acceptor in the catalytic mechanism. Arginine 290 provides a ligand contact to substrate.

It belongs to the metallo-dependent hydrolases superfamily. As to quaternary structure, homodimer. The cofactor is Zn(2+).

The enzyme catalyses (3Z)-2-oxo-4-carboxy-3-hexenedioate + H2O = (2S)-2-hydroxy-4-oxobutane-1,2,4-tricarboxylate. It functions in the pathway secondary metabolite metabolism; lignin degradation. Functionally, contributes to the degradation of lignin at the level of the protocatechuate 4,5-cleavage pathway. Catalyzes the hydration of the double bond of (3Z)-2-keto-4-carboxy-3-hexenedioate (KCH) to (4S)-4-carboxy-4-hydroxy-2-oxoadipate (CHA, also named (2S)-2-hydroxy-4-oxobutane-1,2,4-tricarboxylate). Is involved in the catabolism of both vanillate and syringate. The polypeptide is 2-keto-4-carboxy-3-hexenedioate hydratase (Sphingobium sp. (strain NBRC 103272 / SYK-6)).